Reading from the N-terminus, the 436-residue chain is EPS I polysaccharide export inner membrane protein EpsE (436 aa).

Helical transmembrane passes span 20–40 (VLGL…NIML), 49–69 (FGLF…LATG), 91–111 (LCAF…ALYL), 132–152 (MAAI…FLYA), 160–180 (ASVS…MGPI), 184–204 (VVAL…QLVI), 234–254 (VLTT…LAAM), 261–281 (LALF…PATL), 307–327 (ALLF…LLAG), 341–361 (AAAS…SVLL), 375–395 (FAMA…ALRL), and 396–416 (GYGA…LILF).

The protein to E.coli bicyclomycin resistance protein (BCR).

The protein localises to the cell inner membrane. Functionally, probably involved in polymerization and/or export of exopolysaccharide EPS I which functions as a virulence factor. May play a role in export of EPS I or its intermediates across the membranes. This is EPS I polysaccharide export inner membrane protein EpsE (epsE) from Ralstonia nicotianae (strain ATCC BAA-1114 / GMI1000) (Ralstonia solanacearum).